A 142-amino-acid polypeptide reads, in one-letter code: Hemoglobin subunit alpha-1 (142 aa).

One can recognise a Globin domain in the interval 2–142 (VLSPADKTNV…VSTVLTSKYR (141 aa)). Histidine 59 contributes to the O2 binding site. Histidine 88 serves as a coordination point for heme b.

Belongs to the globin family. In terms of assembly, heterotetramer of two alpha chains and two beta chains. In terms of tissue distribution, red blood cells.

Involved in oxygen transport from the lung to the various peripheral tissues. Its function is as follows. Hemopressin acts as an antagonist peptide of the cannabinoid receptor CNR1. Hemopressin-binding efficiently blocks cannabinoid receptor CNR1 and subsequent signaling. The protein is Hemoglobin subunit alpha-1 (HBA1) of Hylobates lar (Lar gibbon).